The sequence spans 236 residues: Purine nucleoside phosphorylase DeoD-type 1 (236 aa).

His5 is an a purine D-ribonucleoside binding site. Phosphate contacts are provided by residues Gly21, Arg25, Arg44, and 88-91 (RVGS). Residues 180-182 (EME) and 204-205 (TD) each bind a purine D-ribonucleoside. Catalysis depends on Asp205, which acts as the Proton donor.

It belongs to the PNP/UDP phosphorylase family. As to quaternary structure, homohexamer; trimer of homodimers.

The catalysed reaction is a purine D-ribonucleoside + phosphate = a purine nucleobase + alpha-D-ribose 1-phosphate. It catalyses the reaction a purine 2'-deoxy-D-ribonucleoside + phosphate = a purine nucleobase + 2-deoxy-alpha-D-ribose 1-phosphate. In terms of biological role, catalyzes the reversible phosphorolytic breakdown of the N-glycosidic bond in the beta-(deoxy)ribonucleoside molecules, with the formation of the corresponding free purine bases and pentose-1-phosphate. This chain is Purine nucleoside phosphorylase DeoD-type 1, found in Shewanella oneidensis (strain ATCC 700550 / JCM 31522 / CIP 106686 / LMG 19005 / NCIMB 14063 / MR-1).